The following is a 189-amino-acid chain: Large ribosomal subunit protein eL14 (189 aa).

This sequence belongs to the eukaryotic ribosomal protein eL14 family.

Component of the large ribosomal subunit. The ribosome is a large ribonucleoprotein complex responsible for the synthesis of proteins in the cell. This is Large ribosomal subunit protein eL14 from Trypanosoma brucei brucei.